We begin with the raw amino-acid sequence, 540 residues long: Sensory neuron membrane protein 1 (540 aa).

Over 1–105 (MRTDDPVIGN…WIFRPDLSKP (105 aa)) the chain is Cytoplasmic. Residues 106–126 (LTGDEMITIPHPLILGALLMV) form a helical membrane-spanning segment. The Extracellular segment spans residues 127–436 (QRDREAMMPL…YTLFLGLRFN (310 aa)). Asn193 and Asn206 each carry an N-linked (GlcNAc...) asparagine glycan. 3 disulfide bridges follow: Cys245-Cys310, Cys274-Cys330, and Cys312-Cys319. Asn418 is a glycosylation site (N-linked (GlcNAc...) asparagine). Residues 437-457 (TAVKWLTIIIGTIGTIVGGFM) traverse the membrane as a helical segment. At 458–540 (HYKRTTKMVN…VTVTEMQERY (83 aa)) the chain is on the cytoplasmic side.

Belongs to the CD36 family.

Its subcellular location is the cell membrane. In terms of biological role, plays an olfactory role that is not restricted to pheromone sensitivity. In Aedes aegypti (Yellowfever mosquito), this protein is Sensory neuron membrane protein 1.